Consider the following 729-residue polypeptide: Fatty acid oxidation complex subunit alpha (729 aa).

The segment at 1 to 189 (MLYKGDTLYL…KIGLVDGVVK (189 aa)) is enoyl-CoA hydratase/isomerase. D296 contributes to the substrate binding site. A 3-hydroxyacyl-CoA dehydrogenase region spans residues 311-729 (ETPKQAAVLG…ARPVGSLKTA (419 aa)). Residues M324, D343, 400–402 (VVE), K407, and S429 contribute to the NAD(+) site. H450 acts as the For 3-hydroxyacyl-CoA dehydrogenase activity in catalysis. N453 is a binding site for NAD(+). Substrate is bound by residues N500 and Y660. The interval 708 to 729 (RHNEPYYPPVEPARPVGSLKTA) is disordered.

This sequence in the N-terminal section; belongs to the enoyl-CoA hydratase/isomerase family. It in the C-terminal section; belongs to the 3-hydroxyacyl-CoA dehydrogenase family. As to quaternary structure, heterotetramer of two alpha chains (FadB) and two beta chains (FadA).

It carries out the reaction a (3S)-3-hydroxyacyl-CoA + NAD(+) = a 3-oxoacyl-CoA + NADH + H(+). The enzyme catalyses a (3S)-3-hydroxyacyl-CoA = a (2E)-enoyl-CoA + H2O. The catalysed reaction is a 4-saturated-(3S)-3-hydroxyacyl-CoA = a (3E)-enoyl-CoA + H2O. It catalyses the reaction (3S)-3-hydroxybutanoyl-CoA = (3R)-3-hydroxybutanoyl-CoA. It carries out the reaction a (3Z)-enoyl-CoA = a 4-saturated (2E)-enoyl-CoA. The enzyme catalyses a (3E)-enoyl-CoA = a 4-saturated (2E)-enoyl-CoA. It participates in lipid metabolism; fatty acid beta-oxidation. Functionally, involved in the aerobic and anaerobic degradation of long-chain fatty acids via beta-oxidation cycle. Catalyzes the formation of 3-oxoacyl-CoA from enoyl-CoA via L-3-hydroxyacyl-CoA. It can also use D-3-hydroxyacyl-CoA and cis-3-enoyl-CoA as substrate. In Salmonella typhimurium (strain LT2 / SGSC1412 / ATCC 700720), this protein is Fatty acid oxidation complex subunit alpha.